Consider the following 432-residue polypeptide: Enolase (432 aa).

Q163 contacts (2R)-2-phosphoglycerate. Residue E205 is the Proton donor of the active site. Residues D242, E285, and D312 each coordinate Mg(2+). The (2R)-2-phosphoglycerate site is built by K337, R366, S367, and K388. The active-site Proton acceptor is the K337.

It belongs to the enolase family. Mg(2+) is required as a cofactor.

The protein localises to the cytoplasm. It is found in the secreted. It localises to the cell surface. It catalyses the reaction (2R)-2-phosphoglycerate = phosphoenolpyruvate + H2O. Its pathway is carbohydrate degradation; glycolysis; pyruvate from D-glyceraldehyde 3-phosphate: step 4/5. Its function is as follows. Catalyzes the reversible conversion of 2-phosphoglycerate (2-PG) into phosphoenolpyruvate (PEP). It is essential for the degradation of carbohydrates via glycolysis. In Bifidobacterium longum subsp. infantis (strain ATCC 15697 / DSM 20088 / JCM 1222 / NCTC 11817 / S12), this protein is Enolase.